The primary structure comprises 1113 residues: Receptor-type guanylate cyclase gcy-18 (1113 aa).

The signal sequence occupies residues 1–18; the sequence is MLKTLLFILIFFNIPIIA. The Extracellular portion of the chain corresponds to 19-499; the sequence is IEEIPDIKEN…RGQRCSYLLE (481 aa). Residues Asn-72, Asn-369, and Asn-456 are each glycosylated (N-linked (GlcNAc...) asparagine). The chain crosses the membrane as a helical span at residues 500–520; it reads ISVGSLIILLILISVVFFFLF. Residues 521–1113 are Cytoplasmic-facing; sequence RYCENKQLEK…TNYIQNVEGV (593 aa). A Protein kinase domain is found at 543–848; that stretch reads IDEEQVKSMM…RVRLNTEMVL (306 aa). Positions 853 to 884 form a coiled coil; it reads SLVDQMMKMMEQYANNLEKLVAERTGMLEEAN. One can recognise a Guanylate cyclase domain in the interval 918–1048; it reads TILFSDIVGF…DTVNVSSRME (131 aa). Residues Asp-923, Ile-924, and Asp-967 each contribute to the Mg(2+) site.

Belongs to the adenylyl cyclase class-4/guanylyl cyclase family. As to expression, expressed specifically in AFD sensory neurons.

It localises to the cell membrane. The protein resides in the cell projection. The protein localises to the cilium. The enzyme catalyses GTP = 3',5'-cyclic GMP + diphosphate. Guanylate cyclase involved in the production of the second messenger cGMP. Regulates thermotaxis responses in AFD sensory neurons. May regulate AFD neuronal activity such as calcium responses to temperature gradients. The protein is Receptor-type guanylate cyclase gcy-18 of Caenorhabditis elegans.